Reading from the N-terminus, the 132-residue chain is Fatty acid-binding protein 1 (132 aa).

A fatty acid is bound by residues R106 and 128–130 (RYY).

The protein belongs to the calycin superfamily. Fatty-acid binding protein (FABP) family. Monomer. Midgut.

It is found in the cytoplasm. Functionally, binds fatty acids in a 1:1 molar ratio. The chain is Fatty acid-binding protein 1 (MFB1) from Manduca sexta (Tobacco hawkmoth).